Reading from the N-terminus, the 269-residue chain is 3'(2'),5'-bisphosphate nucleotidase CysQ (269 aa).

Positions 69, 89, 91, 92, and 216 each coordinate Mg(2+). Glu-69 is a binding site for substrate. Residues 91–94 (LDGT) and Asp-216 each bind substrate.

Belongs to the inositol monophosphatase superfamily. CysQ family. The cofactor is Mg(2+).

It is found in the cell inner membrane. It catalyses the reaction adenosine 3',5'-bisphosphate + H2O = AMP + phosphate. Its function is as follows. Converts adenosine-3',5'-bisphosphate (PAP) to AMP. The polypeptide is 3'(2'),5'-bisphosphate nucleotidase CysQ (Aggregatibacter actinomycetemcomitans (Actinobacillus actinomycetemcomitans)).